The primary structure comprises 90 residues: UPF0335 protein RPA4190 (90 aa).

Belongs to the UPF0335 family.

In Rhodopseudomonas palustris (strain ATCC BAA-98 / CGA009), this protein is UPF0335 protein RPA4190.